Consider the following 226-residue polypeptide: 2-C-methyl-D-erythritol 4-phosphate cytidylyltransferase (226 aa).

The protein belongs to the IspD/TarI cytidylyltransferase family. IspD subfamily.

The catalysed reaction is 2-C-methyl-D-erythritol 4-phosphate + CTP + H(+) = 4-CDP-2-C-methyl-D-erythritol + diphosphate. It participates in isoprenoid biosynthesis; isopentenyl diphosphate biosynthesis via DXP pathway; isopentenyl diphosphate from 1-deoxy-D-xylulose 5-phosphate: step 2/6. Its function is as follows. Catalyzes the formation of 4-diphosphocytidyl-2-C-methyl-D-erythritol from CTP and 2-C-methyl-D-erythritol 4-phosphate (MEP). The protein is 2-C-methyl-D-erythritol 4-phosphate cytidylyltransferase of Prochlorococcus marinus (strain MIT 9312).